A 144-amino-acid chain; its full sequence is uncharacterized protein (144 aa).

This is an uncharacterized protein from Saccharomyces cerevisiae (strain ATCC 204508 / S288c) (Baker's yeast).